A 427-amino-acid polypeptide reads, in one-letter code: Glutamate-1-semialdehyde 2,1-aminomutase (427 aa).

Position 265 is an N6-(pyridoxal phosphate)lysine (K265).

Belongs to the class-III pyridoxal-phosphate-dependent aminotransferase family. HemL subfamily. As to quaternary structure, homodimer. It depends on pyridoxal 5'-phosphate as a cofactor.

Its subcellular location is the cytoplasm. The catalysed reaction is (S)-4-amino-5-oxopentanoate = 5-aminolevulinate. It functions in the pathway porphyrin-containing compound metabolism; protoporphyrin-IX biosynthesis; 5-aminolevulinate from L-glutamyl-tRNA(Glu): step 2/2. This is Glutamate-1-semialdehyde 2,1-aminomutase from Idiomarina loihiensis (strain ATCC BAA-735 / DSM 15497 / L2-TR).